The chain runs to 399 residues: Tyrosine--tRNA ligase 2 (399 aa).

A 'HIGH' region motif is present at residues 41-50 (PTAPDLHLGH). A 'KMSKS' region motif is present at residues 225 to 229 (KMSKS). Position 228 (Lys228) interacts with ATP. Residues 336 to 398 (ILIANLLKEA…GKRKFANITV (63 aa)) enclose the S4 RNA-binding domain.

Belongs to the class-I aminoacyl-tRNA synthetase family. TyrS type 2 subfamily. Homodimer.

The protein resides in the cytoplasm. The catalysed reaction is tRNA(Tyr) + L-tyrosine + ATP = L-tyrosyl-tRNA(Tyr) + AMP + diphosphate + H(+). Its function is as follows. Catalyzes the attachment of tyrosine to tRNA(Tyr) in a two-step reaction: tyrosine is first activated by ATP to form Tyr-AMP and then transferred to the acceptor end of tRNA(Tyr). The sequence is that of Tyrosine--tRNA ligase 2 from Pseudoalteromonas translucida (strain TAC 125).